Reading from the N-terminus, the 145-residue chain is Ribosomal RNA large subunit methyltransferase H (145 aa).

S-adenosyl-L-methionine contacts are provided by residues leucine 64, glycine 93, and 112 to 117 (LSPLTF).

Belongs to the RNA methyltransferase RlmH family. In terms of assembly, homodimer.

It is found in the cytoplasm. It catalyses the reaction pseudouridine(1915) in 23S rRNA + S-adenosyl-L-methionine = N(3)-methylpseudouridine(1915) in 23S rRNA + S-adenosyl-L-homocysteine + H(+). In terms of biological role, specifically methylates the pseudouridine at position 1915 (m3Psi1915) in 23S rRNA. This chain is Ribosomal RNA large subunit methyltransferase H, found in Prochlorococcus marinus (strain MIT 9211).